The chain runs to 206 residues: uncharacterized protein (206 aa).

This is an uncharacterized protein from Haemophilus influenzae (strain ATCC 51907 / DSM 11121 / KW20 / Rd).